The primary structure comprises 150 residues: Photosystem II extrinsic protein V (150 aa).

Positions 1–20 (MIRVIMLLVLVWMTPMISWA) are cleaved as a signal peptide. Cys50, Cys53, His54, and His105 together coordinate heme c.

This sequence belongs to the cytochrome c family. PsbV subfamily. PSII is composed of 1 copy each of membrane proteins PsbA, PsbB, PsbC, PsbD, PsbE, PsbF, PsbH, PsbI, PsbJ, PsbK, PsbL, PsbM, PsbT, PsbY, PsbZ, Psb30/Ycf12, at least 3 peripheral proteins of the oxygen-evolving complex and a large number of cofactors. It forms dimeric complexes. The extrinsic subunits in red algae are PsbO (OEC33), PsbQ', cytochrome c-550 and PsbU. It depends on heme c as a cofactor.

It localises to the plastid. It is found in the chloroplast thylakoid membrane. Functionally, one of the extrinsic, lumenal subunits of photosystem II (PSII). PSII is a light-driven water plastoquinone oxidoreductase, using light energy to abstract electrons from H(2)O, generating a proton gradient subsequently used for ATP formation. The extrinsic proteins stabilize the structure of photosystem II oxygen-evolving complex (OEC), the ion environment of oxygen evolution and protect the OEC against heat-induced inactivation. The chain is Photosystem II extrinsic protein V from Cyanidioschyzon merolae (strain NIES-3377 / 10D) (Unicellular red alga).